Reading from the N-terminus, the 257-residue chain is Probable amino-acid ABC transporter ATP-binding protein y4tH (257 aa).

The region spanning 6–251 (IVFDKVKKAY…PKEERTREFL (246 aa)) is the ABC transporter domain. 38–45 (GPSGSGKS) serves as a coordination point for ATP.

Belongs to the ABC transporter superfamily.

It localises to the cell inner membrane. Its function is as follows. Probably part of a binding-protein-dependent transport system y4tEFGH for an amino acid. Probably responsible for energy coupling to the transport system. In Sinorhizobium fredii (strain NBRC 101917 / NGR234), this protein is Probable amino-acid ABC transporter ATP-binding protein y4tH.